We begin with the raw amino-acid sequence, 1007 residues long: Beta-galactosidase A (1007 aa).

The signal sequence occupies residues 1-18; that stretch reads MKLSSACAIALLAAQAAG. Substrate contacts are provided by residues tyrosine 96 and 140 to 142; that span reads NAE. The N-linked (GlcNAc...) asparagine glycan is linked to asparagine 156. Asparagine 199 is a substrate binding site. Glutamate 200 serves as the catalytic Proton donor. 2 cysteine pairs are disulfide-bonded: cysteine 205-cysteine 206 and cysteine 266-cysteine 315. Residue glutamate 298 is the Nucleophile of the active site. Position 364 (tyrosine 364) interacts with substrate. 10 N-linked (GlcNAc...) asparagine glycosylation sites follow: asparagine 402, asparagine 422, asparagine 478, asparagine 522, asparagine 622, asparagine 739, asparagine 760, asparagine 777, asparagine 805, and asparagine 914.

This sequence belongs to the glycosyl hydrolase 35 family.

It is found in the secreted. It catalyses the reaction Hydrolysis of terminal non-reducing beta-D-galactose residues in beta-D-galactosides.. Its function is as follows. Cleaves beta-linked terminal galactosyl residues from gangliosides, glycoproteins, and glycosaminoglycans. The polypeptide is Beta-galactosidase A (lacA) (Aspergillus niger (strain ATCC MYA-4892 / CBS 513.88 / FGSC A1513)).